Consider the following 177-residue polypeptide: Protein-export protein SecB (177 aa).

Belongs to the SecB family. Homotetramer, a dimer of dimers. One homotetramer interacts with 1 SecA dimer.

It localises to the cytoplasm. Its function is as follows. One of the proteins required for the normal export of preproteins out of the cell cytoplasm. It is a molecular chaperone that binds to a subset of precursor proteins, maintaining them in a translocation-competent state. It also specifically binds to its receptor SecA. The polypeptide is Protein-export protein SecB (Ehrlichia canis (strain Jake)).